The sequence spans 344 residues: Outer membrane protein B (344 aa).

An N-terminal signal peptide occupies residues 1-30 (MNSKMLKHLRLATLSFSMFFGIVSSPAVYA).

It belongs to the chlamydial OMP family.

The protein resides in the cell outer membrane. This Chlamydia pneumoniae (Chlamydophila pneumoniae) protein is Outer membrane protein B (ompB).